The chain runs to 534 residues: Probable bifunctional tRNA threonylcarbamoyladenosine biosynthesis protein (534 aa).

The segment at 1-324 (MICLGIEGTA…YRTDQVEVTW (324 aa)) is kae1. Positions 108, 112, and 129 each coordinate Fe cation. L-threonylcarbamoyladenylate is bound by residues 129–133 (YTSGG), Asp161, Gly174, Glu178, and Asn258. Asp286 contributes to the Fe cation binding site. One can recognise a Protein kinase domain in the interval 335–534 (LPDNIKEKGA…DEIEKRGRYL (200 aa)). Residues 340–348 (KEKGAEADI) and Lys361 contribute to the ATP site. Asp455 serves as the catalytic Proton acceptor; for kinase activity.

This sequence in the N-terminal section; belongs to the KAE1 / TsaD family. The protein in the C-terminal section; belongs to the protein kinase superfamily. Tyr protein kinase family. BUD32 subfamily. As to quaternary structure, component of the KEOPS complex that consists of Kae1, Bud32, Cgi121 and Pcc1; the whole complex dimerizes. Fe(2+) is required as a cofactor.

Its subcellular location is the cytoplasm. It catalyses the reaction L-seryl-[protein] + ATP = O-phospho-L-seryl-[protein] + ADP + H(+). It carries out the reaction L-threonyl-[protein] + ATP = O-phospho-L-threonyl-[protein] + ADP + H(+). The catalysed reaction is L-threonylcarbamoyladenylate + adenosine(37) in tRNA = N(6)-L-threonylcarbamoyladenosine(37) in tRNA + AMP + H(+). Its function is as follows. Required for the formation of a threonylcarbamoyl group on adenosine at position 37 (t(6)A37) in tRNAs that read codons beginning with adenine. Is a component of the KEOPS complex that is probably involved in the transfer of the threonylcarbamoyl moiety of threonylcarbamoyl-AMP (TC-AMP) to the N6 group of A37. The Kae1 domain likely plays a direct catalytic role in this reaction. The Bud32 domain probably displays kinase activity that regulates Kae1 function. The chain is Probable bifunctional tRNA threonylcarbamoyladenosine biosynthesis protein from Methanosphaera stadtmanae (strain ATCC 43021 / DSM 3091 / JCM 11832 / MCB-3).